The primary structure comprises 152 residues: UPF0266 membrane protein PM0830 (152 aa).

The next 3 helical transmembrane spans lie at Met1–Tyr21, Lys45–Leu65, and Ser66–Ile86.

This sequence belongs to the UPF0266 family.

It is found in the cell inner membrane. This Pasteurella multocida (strain Pm70) protein is UPF0266 membrane protein PM0830.